The primary structure comprises 193 residues: MSNILIINGAKKFAHSNGQLNDTLTEVADGTLRDLGHDVRIVRADSDYDVKAEVQNFLWADVVIWQMPGWWMGAPWTVKKYIDDVFTEGHGTLYASDGRTRKDPSKKYGSGGLVQGKKYMLSLTWNAPMEAFTEKDQFFHGVGVDGVYLPFHKANQFLGMEPLPTFIANDVIKMPDVPRYTEEYRKHLVEIFG.

FAD is bound by residues 16 to 23, 69 to 72, Tyr-108, and 124 to 127; these read SNGQLNDT, GWWM, and TWNA.

This sequence belongs to the oxidoreductase MdaB family. In terms of assembly, homodimer. It depends on FAD as a cofactor.

The protein resides in the cytoplasm. It carries out the reaction a quinone + NADPH + H(+) = a quinol + NADP(+). Its function is as follows. NADPH-specific quinone reductase. This chain is NADPH:quinone oxidoreductase MdaB, found in Escherichia coli O157:H7.